Consider the following 346-residue polypeptide: MEFSAKQIAAFIQGEIIGDENATVHTFAKIEEGMPGAISFLSNPKYTPYIYETQSSIVLVNKDFVPEHEIRATLIKVDNAYESLAKLLNLYEMSKPKKQGIDSLAYIAPSAKIGENVYIGAFAYIGENAVIGDNTQIYPHTFVGDGVKIGNGCLLYSNVNVYHDCRIGNECILHSGAVIGADGFGFAPTPNGYDKIPQIGIVILEDKVDIGANTCVDRATMGATIIHSGAKIDNLVQIAHNDEIGSHTVMAAQVGIAGSAKIGEWCMFGGQVGIAGHITIGDRVNLGAQSGIPSSIKADSVLIGTPPMEPKAYFKAAVVTKNLPDMQKEIRNLRKEVEELKQLLNK.

His-240 acts as the Proton acceptor in catalysis.

Belongs to the transferase hexapeptide repeat family. LpxD subfamily. Homotrimer.

It carries out the reaction a UDP-3-O-[(3R)-3-hydroxyacyl]-alpha-D-glucosamine + a (3R)-hydroxyacyl-[ACP] = a UDP-2-N,3-O-bis[(3R)-3-hydroxyacyl]-alpha-D-glucosamine + holo-[ACP] + H(+). The protein operates within bacterial outer membrane biogenesis; LPS lipid A biosynthesis. Its function is as follows. Catalyzes the N-acylation of UDP-3-O-acylglucosamine using 3-hydroxyacyl-ACP as the acyl donor. Is involved in the biosynthesis of lipid A, a phosphorylated glycolipid that anchors the lipopolysaccharide to the outer membrane of the cell. The chain is UDP-3-O-acylglucosamine N-acyltransferase from Bacteroides thetaiotaomicron (strain ATCC 29148 / DSM 2079 / JCM 5827 / CCUG 10774 / NCTC 10582 / VPI-5482 / E50).